Here is a 185-residue protein sequence, read N- to C-terminus: Ribosome-recycling factor (185 aa).

This sequence belongs to the RRF family.

It is found in the cytoplasm. Responsible for the release of ribosomes from messenger RNA at the termination of protein biosynthesis. May increase the efficiency of translation by recycling ribosomes from one round of translation to another. The protein is Ribosome-recycling factor of Bacillus mycoides (strain KBAB4) (Bacillus weihenstephanensis).